The following is a 21-amino-acid chain: Dart gland peptide (21 aa).

The disordered stretch occupies residues 1–21 (SINNTGGSGNRRLDKNGFAGQ). A glycan (N-linked (GlcNAc...) asparagine) is linked at asparagine 3.

Its subcellular location is the secreted. The polypeptide is Dart gland peptide (Cornu aspersum (Brown garden snail)).